A 144-amino-acid chain; its full sequence is Large ribosomal subunit protein uL15 (144 aa).

A disordered region spans residues 1 to 54; the sequence is MRLNTLSPAEGSKKAGKRLGRGIGSGLGKTGGRGHKGQNSRSGGGVRRGFEGGQ. The span at 21-31 shows a compositional bias: gly residues; sequence RGIGSGLGKTG.

This sequence belongs to the universal ribosomal protein uL15 family. As to quaternary structure, part of the 50S ribosomal subunit.

In terms of biological role, binds to the 23S rRNA. The polypeptide is Large ribosomal subunit protein uL15 (Enterobacter sp. (strain 638)).